A 204-amino-acid chain; its full sequence is Thioredoxin-like 4, chloroplastic (204 aa).

The N-terminal 27 residues, 1 to 27 (MSSLLNISHCSYHGYSGLTSRGGINTV), are a transit peptide targeting the chloroplast. The Thioredoxin domain occupies 63–201 (AKSLSQENLV…IDAAILKYTS (139 aa)). Catalysis depends on nucleophile residues cysteine 119 and cysteine 122. Residues cysteine 119 and cysteine 122 are joined by a disulfide bond.

This sequence belongs to the thioredoxin family.

The protein resides in the plastid. The protein localises to the chloroplast. In terms of biological role, probable thiol-disulfide oxidoreductase that may participate in various redox reactions. The sequence is that of Thioredoxin-like 4, chloroplastic from Arabidopsis thaliana (Mouse-ear cress).